We begin with the raw amino-acid sequence, 1119 residues long: G8 domain-containing protein DDB_G0288475 (1119 aa).

The N-terminal stretch at 1-22 (MKYSSFLLLFIYIFFILNNINA) is a signal peptide. Residues 276–404 (TIWTSGVVPL…YHNTWTKLAA (129 aa)) form the G8 domain. N-linked (GlcNAc...) asparagine glycosylation is found at asparagine 308, asparagine 559, asparagine 736, asparagine 854, asparagine 968, asparagine 1035, asparagine 1056, and asparagine 1070.

Belongs to the comF family.

Its subcellular location is the secreted. The sequence is that of G8 domain-containing protein DDB_G0288475 from Dictyostelium discoideum (Social amoeba).